Reading from the N-terminus, the 61-residue chain is Short neurotoxin 2 (61 aa).

4 disulfides stabilise this stretch: cysteine 3/cysteine 23, cysteine 17/cysteine 40, cysteine 42/cysteine 53, and cysteine 54/cysteine 59.

The protein belongs to the three-finger toxin family. Short-chain subfamily. Type I alpha-neurotoxin sub-subfamily. As to expression, expressed by the venom gland.

It is found in the secreted. Its function is as follows. Binds to muscle nicotinic acetylcholine receptor (nAChR) and inhibit acetylcholine from binding to the receptor, thereby impairing neuromuscular transmission. This Naja nivea (Cape cobra) protein is Short neurotoxin 2.